Here is a 286-residue protein sequence, read N- to C-terminus: Bifunctional protein FolD (286 aa).

Residues 168 to 170 (GRG), Thr-195, and Val-236 each bind NADP(+).

The protein belongs to the tetrahydrofolate dehydrogenase/cyclohydrolase family. Homodimer.

It catalyses the reaction (6R)-5,10-methylene-5,6,7,8-tetrahydrofolate + NADP(+) = (6R)-5,10-methenyltetrahydrofolate + NADPH. It carries out the reaction (6R)-5,10-methenyltetrahydrofolate + H2O = (6R)-10-formyltetrahydrofolate + H(+). The protein operates within one-carbon metabolism; tetrahydrofolate interconversion. In terms of biological role, catalyzes the oxidation of 5,10-methylenetetrahydrofolate to 5,10-methenyltetrahydrofolate and then the hydrolysis of 5,10-methenyltetrahydrofolate to 10-formyltetrahydrofolate. The protein is Bifunctional protein FolD of Mycolicibacterium gilvum (strain PYR-GCK) (Mycobacterium gilvum (strain PYR-GCK)).